Reading from the N-terminus, the 343-residue chain is MRRFFYRHSRGVTEVVVGSGLQYGDYVERPVVLAEEGLRPPIPGAPTLALRGGEEVKSLEVLTKVYGFLKEVGADRSTTLVAVGGGALLDLATFAAGTYMRGIRLVHIPTTLLAMVDAALGGKGAVDWGPVKNLIGVFYQPAAILCDLSWLGTLPERVYRSAFAEVVKYGLALDGDFYSWVRENAKALLARDGGALEYAVYRSLQLKAGVVEVDEFEERGVRQVLNVGHTVGHAVERVLGLLHGEAVAVGMVAELRLSSELGYLRESHVAEAAEVLSSLGLPTSVKATEQQLAEAAALVKFDKKRRGGHIYIPLVVRPGRWILEKIAVEEVEKAVRYVLRQGG.

Residues 86-90 (GALLD), 110-111 (TT), Lys-123, and Lys-132 contribute to the NAD(+) site. 3 residues coordinate Zn(2+): Glu-165, His-229, and His-243.

Belongs to the sugar phosphate cyclases superfamily. Dehydroquinate synthase family. Co(2+) serves as cofactor. It depends on Zn(2+) as a cofactor. NAD(+) is required as a cofactor.

The protein localises to the cytoplasm. The catalysed reaction is 7-phospho-2-dehydro-3-deoxy-D-arabino-heptonate = 3-dehydroquinate + phosphate. Its pathway is metabolic intermediate biosynthesis; chorismate biosynthesis; chorismate from D-erythrose 4-phosphate and phosphoenolpyruvate: step 2/7. Its function is as follows. Catalyzes the conversion of 3-deoxy-D-arabino-heptulosonate 7-phosphate (DAHP) to dehydroquinate (DHQ). This is 3-dehydroquinate synthase from Pyrobaculum neutrophilum (strain DSM 2338 / JCM 9278 / NBRC 100436 / V24Sta) (Thermoproteus neutrophilus).